Reading from the N-terminus, the 681-residue chain is Glycogen-binding subunit 76A (681 aa).

Disordered stretches follow at residues 1-20, 53-94, 232-251, 285-391, and 405-435; these read MNDP…SRPP, LGSQ…DLQP, SLTE…NGHL, FADR…ASNL, and QDAT…CRPQ. The segment covering 59-69 has biased composition (acidic residues); that stretch reads EEGEGNAEDEP. Residues 72–91 show a composition bias toward polar residues; that stretch reads NGTSTNTWVNSHDSEQTVTD. Basic and acidic residues-rich tracts occupy residues 237–251, 297–308, and 321–336; these read EQTK…NGHL, RVQKESSQERVP, and PSDR…RVQE. Positions 353-364 are enriched in polar residues; that stretch reads TESISTEVTTLE. A compositionally biased stretch (basic and acidic residues) spans 365–374; that stretch reads RSPEESRNDE. Residues 525–632 form the CBM21 domain; sequence AVREKQVSLE…NNYGANYCFQ (108 aa). At Thr-545 the chain carries Phosphothreonine. 2 positions are modified to phosphoserine: Ser-547 and Ser-549.

This chain is Glycogen-binding subunit 76A (Gbs-76A), found in Drosophila melanogaster (Fruit fly).